We begin with the raw amino-acid sequence, 92 residues long: Large ribosomal subunit protein bL25 (92 aa).

This sequence belongs to the bacterial ribosomal protein bL25 family. Part of the 50S ribosomal subunit; part of the 5S rRNA/L5/L18/L25 subcomplex. Contacts the 5S rRNA. Binds to the 5S rRNA independently of L5 and L18.

In terms of biological role, this is one of the proteins that binds to the 5S RNA in the ribosome where it forms part of the central protuberance. The polypeptide is Large ribosomal subunit protein bL25 (Aliivibrio fischeri (strain ATCC 700601 / ES114) (Vibrio fischeri)).